The sequence spans 108 residues: MFKTTLLFFITALCEIIGCFLPWLWLKRNGSIWLLLPAGVSLAFFVWLLTLHPAASGRVYAAYGGVYVCTALLWLRFIDGVKLSLYDWSGALIALCGMLIIVAGWGRA.

The Periplasmic segment spans residues 1-5 (MFKTT). Residues 6–26 (LLFFITALCEIIGCFLPWLWL) traverse the membrane as a helical segment. At 27-30 (KRNG) the chain is on the cytoplasmic side. A helical transmembrane segment spans residues 31 to 51 (SIWLLLPAGVSLAFFVWLLTL). Topologically, residues 52 to 60 (HPAASGRVY) are periplasmic. A helical membrane pass occupies residues 61–81 (AAYGGVYVCTALLWLRFIDGV). The Cytoplasmic portion of the chain corresponds to 82 to 84 (KLS). Residues 85–105 (LYDWSGALIALCGMLIIVAGW) form a helical membrane-spanning segment. The Periplasmic segment spans residues 106–108 (GRA).

It belongs to the UPF0060 family.

It localises to the cell inner membrane. The sequence is that of UPF0060 membrane protein YnfA from Escherichia fergusonii (strain ATCC 35469 / DSM 13698 / CCUG 18766 / IAM 14443 / JCM 21226 / LMG 7866 / NBRC 102419 / NCTC 12128 / CDC 0568-73).